A 591-amino-acid polypeptide reads, in one-letter code: Aspartate--tRNA ligase (591 aa).

Residue Glu173 coordinates L-aspartate. Residues 197–200 (QLFK) are aspartate. Arg219 lines the L-aspartate pocket. Residues 219 to 221 (RDE) and Gln228 each bind ATP. An L-aspartate-binding site is contributed by His448. Glu482 serves as a coordination point for ATP. Arg489 contributes to the L-aspartate binding site. Residue 534-537 (GLDR) coordinates ATP.

The protein belongs to the class-II aminoacyl-tRNA synthetase family. Type 1 subfamily. As to quaternary structure, homodimer.

It localises to the cytoplasm. It carries out the reaction tRNA(Asp) + L-aspartate + ATP = L-aspartyl-tRNA(Asp) + AMP + diphosphate. Catalyzes the attachment of L-aspartate to tRNA(Asp) in a two-step reaction: L-aspartate is first activated by ATP to form Asp-AMP and then transferred to the acceptor end of tRNA(Asp). The polypeptide is Aspartate--tRNA ligase (Shewanella amazonensis (strain ATCC BAA-1098 / SB2B)).